The sequence spans 941 residues: Translation initiation factor IF-2 (941 aa).

Basic and acidic residues predominate over residues 170–209 (DAQKAEVDAQKAEAEKPVEVKADESAIEEKKRVAAEESKK). Disordered regions lie at residues 170-228 (DAQK…KAAA) and 252-351 (RAIK…SNFQ). Residues 256 to 269 (APEPVAPVAKPAAE) are compositionally biased toward low complexity. Over residues 271–297 (TLHKPADKKPGEKKDEKKPAVTADKKS) the composition is skewed to basic and acidic residues. Residues 299-308 (KSANVSSTWQ) show a composition bias toward polar residues. The tr-type G domain occupies 441-610 (PRAPVVTVMG…LLQAEVLELK (170 aa)). Residues 450-457 (GHVDHGKT) form a G1 region. Position 450 to 457 (450 to 457 (GHVDHGKT)) interacts with GTP. Residues 475–479 (GITQH) are G2. Residues 496-499 (DTPG) form a G3 region. Residues 496-500 (DTPGH) and 550-553 (NKID) contribute to the GTP site. The segment at 550 to 553 (NKID) is G4. Positions 586 to 588 (SAK) are G5.

This sequence belongs to the TRAFAC class translation factor GTPase superfamily. Classic translation factor GTPase family. IF-2 subfamily.

Its subcellular location is the cytoplasm. One of the essential components for the initiation of protein synthesis. Protects formylmethionyl-tRNA from spontaneous hydrolysis and promotes its binding to the 30S ribosomal subunits. Also involved in the hydrolysis of GTP during the formation of the 70S ribosomal complex. The protein is Translation initiation factor IF-2 of Herminiimonas arsenicoxydans.